A 772-amino-acid chain; its full sequence is Ribosomal protein S6 kinase alpha-4 (772 aa).

The region spanning 33–301 (FELLKVLGTG…AQEVRNHPFF (269 aa)) is the Protein kinase 1 domain. Residues 39–47 (LGTGAYGKV) and Lys-65 contribute to the ATP site. Residue Asp-161 is the Proton acceptor of the active site. At Ser-196 the chain carries Phosphoserine; by autocatalysis. The region spanning 302–371 (QGLDWVALAA…VAPSILFDHN (70 aa)) is the AGC-kinase C-terminal domain. Ser-343 carries the phosphoserine; by MAPK1, MAPK3 and MAPK14 modification. Position 347 is a phosphoserine (Ser-347). Ser-360 and Ser-365 each carry phosphoserine; by autocatalysis. In terms of domain architecture, Protein kinase 2 spans 411 to 674 (DLREPALGQG…LEGLRGSSWL (264 aa)). Residues 417-425 (LGQGSFSVC) and Lys-440 contribute to the ATP site. The active-site Proton acceptor is Asp-530. Thr-542 carries the post-translational modification Phosphothreonine. Position 568 is a phosphothreonine; by MAPK1, MAPK3 and MAPK14 (Thr-568). 2 positions are modified to phosphoserine: Ser-634 and Ser-678. 2 disordered regions span residues 673–696 (WLQDGSARSSPPLRTPDVLESSGP) and 728–772 (AKRR…LPPS). Thr-687 is subject to Phosphothreonine. The segment at 725-772 (APLAKRRKQKLRSATASRRGSPAPANPGRAPVASKGAPRRANGPLPPS) is required for nuclear targeting and association with MAPK14. Ser-737 carries the post-translational modification Phosphoserine; by autocatalysis. Phosphoserine is present on Ser-745.

The protein belongs to the protein kinase superfamily. AGC Ser/Thr protein kinase family. S6 kinase subfamily. In terms of assembly, forms a complex with either MAPK1/ERK2 or MAPK3/ERK1 in quiescent cells which transiently dissociates following mitogenic stimulation. Also associates with MAPK14/p38-alpha. Activated RPS6KA4 associates with and phosphorylates the NF-kappa-B p65 subunit RELA. Mg(2+) serves as cofactor. Ser-343 and Thr-568 phosphorylation is required for kinase activity. Ser-343 and Ser-196 are autophosphorylated by the C-terminal kinase domain, and their phosphorylation is essential for the catalytic activity of the N-terminal kinase domain. Phosphorylated at Ser-343, Thr-568 and Thr-687 by MAPK1/ERK2, MAPK3/ERK1 and MAPK14/p38-alpha. Autophosphorylated at Ser-737 and Ser-745 by the N-terminal kinase domain.

Its subcellular location is the nucleus. The enzyme catalyses L-seryl-[protein] + ATP = O-phospho-L-seryl-[protein] + ADP + H(+). It carries out the reaction L-threonyl-[protein] + ATP = O-phospho-L-threonyl-[protein] + ADP + H(+). Its activity is regulated as follows. Activated by phosphorylation at Ser-343, Thr-568 and Thr-687 by MAPK1/ERK2, MAPK3/ERK1 and MAPK14/p38-alpha, and by further autophosphorylation of Ser-196, Ser-360 and Ser-365 by the activated C-terminal kinase domain. Its function is as follows. Serine/threonine-protein kinase that is required for the mitogen or stress-induced phosphorylation of the transcription factors CREB1 and ATF1 and for the regulation of the transcription factor RELA, and that contributes to gene activation by histone phosphorylation and functions in the regulation of inflammatory genes. Phosphorylates CREB1 and ATF1 in response to mitogenic or stress stimuli such as UV-C irradiation, epidermal growth factor (EGF) and anisomycin. Plays an essential role in the control of RELA transcriptional activity in response to TNF. Phosphorylates 'Ser-10' of histone H3 in response to mitogenics, stress stimuli and EGF, which results in the transcriptional activation of several immediate early genes, including proto-oncogenes c-fos/FOS and c-jun/JUN. May also phosphorylate 'Ser-28' of histone H3. Mediates the mitogen- and stress-induced phosphorylation of high mobility group protein 1 (HMGN1/HMG14). In lipopolysaccharide-stimulated primary macrophages, acts downstream of the Toll-like receptor TLR4 to limit the production of pro-inflammatory cytokines. Functions probably by inducing transcription of the MAP kinase phosphatase DUSP1 and the anti-inflammatory cytokine interleukin 10 (IL10), via CREB1 and ATF1 transcription factors. In Homo sapiens (Human), this protein is Ribosomal protein S6 kinase alpha-4 (RPS6KA4).